The chain runs to 554 residues: Polyamine aminopropyltransferase 2 (554 aa).

Positions 1–13 (MIEPHAPAPPGSP) are enriched in pro residues. Residues 1–20 (MIEPHAPAPPGSPPSWGGPC) form a disordered region. A run of 6 helical transmembrane segments spans residues 37-57 (FLVL…ELEL), 69-89 (VTQA…GSLA), 106-126 (AALA…FAWT), 139-159 (ILLV…VPLL), 184-204 (VGAL…LGQL), and 206-226 (GALL…LGLF). A spermidine synthase region spans residues 235–516 (RWLLLTANAV…RTAPAPRLDP (282 aa)). Positions 247–492 (ALLATATVLA…SVPGPRRAAA (246 aa)) constitute a PABS domain. Glutamine 281 is an S-methyl-5'-thioadenosine binding site. Histidine 313 and aspartate 335 together coordinate spermidine. Residues glutamate 355 and 389-390 (DA) contribute to the S-methyl-5'-thioadenosine site. Aspartate 408 acts as the Proton acceptor in catalysis. The tract at residues 476-495 (DTGPGPGSVPGPRRAAAGPP) is disordered. Low complexity predominate over residues 485 to 495 (PGPRRAAAGPP).

It belongs to the spermidine/spermine synthase family. In terms of assembly, homodimer or homotetramer.

It localises to the cell membrane. The catalysed reaction is S-adenosyl 3-(methylsulfanyl)propylamine + putrescine = S-methyl-5'-thioadenosine + spermidine + H(+). The protein operates within amine and polyamine biosynthesis; spermidine biosynthesis; spermidine from putrescine: step 1/1. Functionally, catalyzes the irreversible transfer of a propylamine group from the amino donor S-adenosylmethioninamine (decarboxy-AdoMet) to putrescine (1,4-diaminobutane) to yield spermidine. The polypeptide is Polyamine aminopropyltransferase 2 (Streptomyces coelicolor (strain ATCC BAA-471 / A3(2) / M145)).